A 24-amino-acid polypeptide reads, in one-letter code: Potassium channel toxin alpha-KTx 6 OcyKTx5 (24 aa).

A disulfide bridge connects residues Cys3 and Cys24.

It belongs to the short scorpion toxin superfamily. Potassium channel inhibitor family. Alpha-KTx 06 subfamily. In terms of tissue distribution, expressed by the venom gland.

The protein localises to the secreted. Its function is as follows. Blocks voltage-gated potassium channels. This is Potassium channel toxin alpha-KTx 6 OcyKTx5 from Opisthacanthus cayaporum (South American scorpion).